Reading from the N-terminus, the 302-residue chain is Glutaminase (302 aa).

Residues S61, N111, E155, N162, Y186, Y238, and V256 each coordinate substrate.

This sequence belongs to the glutaminase family. Homotetramer.

It carries out the reaction L-glutamine + H2O = L-glutamate + NH4(+). The chain is Glutaminase from Pseudomonas paraeruginosa (strain DSM 24068 / PA7) (Pseudomonas aeruginosa (strain PA7)).